A 20-amino-acid chain; its full sequence is Alpha-basrubrin (20 aa).

A compositionally biased stretch (basic and acidic residues) spans 1–13 (GADFQECMKEHSQ). The disordered stretch occupies residues 1 to 20 (GADFQECMKEHSQKQHQHQG).

Functionally, possesses antifungal activity against B.cinerea, M.arachidicola and F.oxysporum but not C.comatus and R.solani. Inhibits HIV-1 reverse transcriptase and cell-free translation. The polypeptide is Alpha-basrubrin (Basella alba (Malabar spinach)).